A 167-amino-acid chain; its full sequence is 2-C-methyl-D-erythritol 2,4-cyclodiphosphate synthase (167 aa).

A divalent metal cation is bound by residues Asp8 and His10. 4-CDP-2-C-methyl-D-erythritol 2-phosphate-binding positions include 8–10 (DIH) and 34–35 (HS). Position 42 (His42) interacts with a divalent metal cation. Residues 56–58 (DIG) and Arg142 each bind 4-CDP-2-C-methyl-D-erythritol 2-phosphate.

Belongs to the IspF family. Homotrimer. The cofactor is a divalent metal cation.

It carries out the reaction 4-CDP-2-C-methyl-D-erythritol 2-phosphate = 2-C-methyl-D-erythritol 2,4-cyclic diphosphate + CMP. It participates in isoprenoid biosynthesis; isopentenyl diphosphate biosynthesis via DXP pathway; isopentenyl diphosphate from 1-deoxy-D-xylulose 5-phosphate: step 4/6. Involved in the biosynthesis of isopentenyl diphosphate (IPP) and dimethylallyl diphosphate (DMAPP), two major building blocks of isoprenoid compounds. Catalyzes the conversion of 4-diphosphocytidyl-2-C-methyl-D-erythritol 2-phosphate (CDP-ME2P) to 2-C-methyl-D-erythritol 2,4-cyclodiphosphate (ME-CPP) with a corresponding release of cytidine 5-monophosphate (CMP). The chain is 2-C-methyl-D-erythritol 2,4-cyclodiphosphate synthase from Buchnera aphidicola subsp. Schizaphis graminum (strain Sg).